The primary structure comprises 514 residues: Exoglucanase 1 (514 aa).

The signal sequence occupies residues 1-17; sequence MYRKLAVISAFLATARA. Q18 is subject to Pyrrolidone carboxylic acid. Positions 18-453 are catalytic; sequence QSACTLQSET…GSTGNPSGGN (436 aa). Cystine bridges form between C21/C89, C36/C42, C67/C88, C78/C84, C155/C414, C189/C227, C193/C226, C247/C273, C255/C260, and C278/C348. Residue N62 is glycosylated (N-linked (GlcNAc) asparagine). The Nucleophile role is filled by E229. Catalysis depends on E234, which acts as the Proton donor/acceptor. A glycan (N-linked (GlcNAc...) (high mannose) asparagine) is linked at N287. Residue N401 is glycosylated (N-linked (GlcNAc) asparagine). A compositionally biased stretch (polar residues) spans 401-437; that stretch reads NETSSTPGAVRGSCSTSSGVPAQVESQSPNAKVTFSN. Residues 401 to 481 are disordered; the sequence is NETSSTPGAV…TGSSPGPTQS (81 aa). Residues 454-478 form a linker region; sequence PPGGNPPGTTTTRRPATTTGSSPGP. Over residues 460–479 the composition is skewed to low complexity; it reads PGTTTTRRPATTTGSSPGPT. An O-linked (Man) threonine glycan is attached at T462. O-linked (Man...) threonine glycosylation is found at T463, T464, and T465. A glycan (O-linked (Man) threonine) is linked at T470. O-linked (Man...) threonine glycans are attached at residues T471 and T472. S474 and S475 each carry an O-linked (Man) serine glycan. Residues 478 to 514 form the CBM1 domain; that stretch reads PTQSHYGQCGGIGYSGPTVCASGTTCQVLNPYYSQCL. T479 carries O-linked (Man) threonine glycosylation. S481 and S492 each carry an O-linked (Man) serine glycan. 2 cysteine pairs are disulfide-bonded: C486–C503 and C497–C513.

The protein belongs to the glycosyl hydrolase 7 (cellulase C) family. In terms of processing, N-glycosylated. A high mannose glycan is attached to Asn-287 (predominantly Man(8)GlcNAc(2)) and single GlcNAc occupancy is observed at Asn-62 and Asn-401 with some site heterogeneity depending on strains and fermentation conditions. O-glycosylated. Within the linker domain, all 8 threonines are variably glycosylated with between at least one, and up to three, mannose residues per site. All serines in this domain are at least partially glycosylated with a single mannose residue. O-glycosylation of the cellulase linker provides protection from proteolysis. Linker glycans also contribute to binding affinity of cellobiohydrolases to cellulose.

It is found in the secreted. The catalysed reaction is Hydrolysis of (1-&gt;4)-beta-D-glucosidic linkages in cellulose and cellotetraose, releasing cellobiose from the non-reducing ends of the chains.. Exocellobiohydrolases (CBH) that catalyzes the hydrolysis of 1,4-beta-D-glucosidic bonds in cellulose to release the disaccharide cellobiose. The degradation of cellulose involves an interplay between different cellulolytic enzymes. Hydrolysis starts with endoglucanases (EGs), which cut internal beta-1,4-glucosidic bonds in cellulose to reduce the polymerization degree of the substrate and create new chain ends for exocellobiohydrolases (CBHs). The CBHs release the disaccharide cellobiose from the non-reducing end of the cellulose polymer chain. Finally, beta-1,4-glucosidases hydrolyze the cellobiose and other short cello-oligosaccharides into glucose units. This is Exoglucanase 1 (cbh1) from Hypocrea jecorina (strain ATCC 56765 / BCRC 32924 / NRRL 11460 / Rut C-30) (Trichoderma reesei).